A 408-amino-acid chain; its full sequence is Beta-ureidopropionase (408 aa).

A CN hydrolase domain is found at 90 to 360 (VRVGLIQNSI…DGLLISDMDL (271 aa)). E137 (proton acceptor) is an active-site residue. K212 functions as the Proton donor in the catalytic mechanism. C249 serves as the catalytic Nucleophile.

It belongs to the carbon-nitrogen hydrolase superfamily. BUP family. Homodimer, homotetramer, homooctamer; can also form higher homooligomers.

Its subcellular location is the cytoplasm. The catalysed reaction is 3-(carbamoylamino)propanoate + H2O + 2 H(+) = beta-alanine + NH4(+) + CO2. It catalyses the reaction 3-(carbamoylamino)-2-methylpropanoate + H2O + 2 H(+) = (R)-3-amino-2-methylpropanoate + NH4(+) + CO2. Its pathway is amino-acid biosynthesis; beta-alanine biosynthesis. Functionally, catalyzes a late step in pyrimidine degradation. Converts N-carbamoyl-beta-aminoisobutyrate and N-carbamoyl-beta-alanine (3-ureidopropanoate) to, respectively, beta-aminoisobutyrate and beta-alanine, ammonia and carbon dioxide. Involved in the recycling of nitrogen from nucleobases to general nitrogen metabolism. In Arabidopsis thaliana (Mouse-ear cress), this protein is Beta-ureidopropionase.